The primary structure comprises 300 residues: m7GpppN-mRNA hydrolase NUDT17 (300 aa).

Residues serine 88–leucine 239 form the Nudix hydrolase domain. Residues glycine 127–glycine 148 carry the Nudix box motif. Mg(2+) is bound by residues glutamate 142 and glutamate 146.

It belongs to the Nudix hydrolase family. It depends on Mg(2+) as a cofactor. Requires Mn(2+) as cofactor.

The enzyme catalyses a 5'-end (N(7)-methyl 5'-triphosphoguanosine)-ribonucleoside in mRNA + H2O = N(7)-methyl-GDP + a 5'-end phospho-ribonucleoside in mRNA + 2 H(+). In terms of biological role, acts as a decapping enzyme capable of hydrolyzing monomethylated capped RNAs (in vitro). Hydrolyzes monomethylated capped RNA after alpha and beta phosphates to form N(7)-methyl-GDP. Shows low activity towards unmethylated capped RNA. This chain is m7GpppN-mRNA hydrolase NUDT17 (nudt17), found in Danio rerio (Zebrafish).